Consider the following 331-residue polypeptide: Ketol-acid reductoisomerase (NADP(+)) (331 aa).

The region spanning 2-182 (AKMYYDKDAD…GGTRAGVIET (181 aa)) is the KARI N-terminal Rossmann domain. NADP(+) is bound by residues 25-28 (FGSQ), Ser51, Ser53, and 83-86 (DEKQ). His108 is a catalytic residue. Residue Gly134 participates in NADP(+) binding. A KARI C-terminal knotted domain is found at 183–328 (TFKEETETDL…KGLREMMAWI (146 aa)). The Mg(2+) site is built by Asp191, Glu195, Glu227, and Glu231. Ser252 is a substrate binding site.

The protein belongs to the ketol-acid reductoisomerase family. It depends on Mg(2+) as a cofactor.

The catalysed reaction is (2R)-2,3-dihydroxy-3-methylbutanoate + NADP(+) = (2S)-2-acetolactate + NADPH + H(+). It carries out the reaction (2R,3R)-2,3-dihydroxy-3-methylpentanoate + NADP(+) = (S)-2-ethyl-2-hydroxy-3-oxobutanoate + NADPH + H(+). The protein operates within amino-acid biosynthesis; L-isoleucine biosynthesis; L-isoleucine from 2-oxobutanoate: step 2/4. It participates in amino-acid biosynthesis; L-valine biosynthesis; L-valine from pyruvate: step 2/4. In terms of biological role, involved in the biosynthesis of branched-chain amino acids (BCAA). Catalyzes an alkyl-migration followed by a ketol-acid reduction of (S)-2-acetolactate (S2AL) to yield (R)-2,3-dihydroxy-isovalerate. In the isomerase reaction, S2AL is rearranged via a Mg-dependent methyl migration to produce 3-hydroxy-3-methyl-2-ketobutyrate (HMKB). In the reductase reaction, this 2-ketoacid undergoes a metal-dependent reduction by NADPH to yield (R)-2,3-dihydroxy-isovalerate. The protein is Ketol-acid reductoisomerase (NADP(+)) of Thermoanaerobacter sp. (strain X514).